Reading from the N-terminus, the 160-residue chain is Protein Bel-3 (160 aa).

Homodimer.

The protein localises to the host cytoplasm. The protein is Protein Bel-3 (bel3) of Human spumaretrovirus (SFVcpz(hu)).